Reading from the N-terminus, the 437-residue chain is Phosphomethylpyrimidine synthase (437 aa).

Residues asparagine 69, methionine 98, tyrosine 127, histidine 163, 185–187 (SRG), 226–229 (DACR), and glutamate 265 each bind substrate. Histidine 269 provides a ligand contact to Zn(2+). Substrate is bound at residue tyrosine 292. Residue histidine 333 participates in Zn(2+) binding. Residues cysteine 409, cysteine 412, and cysteine 416 each contribute to the [4Fe-4S] cluster site.

This sequence belongs to the ThiC family. It depends on [4Fe-4S] cluster as a cofactor.

The enzyme catalyses 5-amino-1-(5-phospho-beta-D-ribosyl)imidazole + S-adenosyl-L-methionine = 4-amino-2-methyl-5-(phosphooxymethyl)pyrimidine + CO + 5'-deoxyadenosine + formate + L-methionine + 3 H(+). The protein operates within cofactor biosynthesis; thiamine diphosphate biosynthesis. Its function is as follows. Catalyzes the synthesis of the hydroxymethylpyrimidine phosphate (HMP-P) moiety of thiamine from aminoimidazole ribotide (AIR) in a radical S-adenosyl-L-methionine (SAM)-dependent reaction. In Clostridium botulinum (strain Kyoto / Type A2), this protein is Phosphomethylpyrimidine synthase.